Reading from the N-terminus, the 1413-residue chain is DNA-directed RNA polymerase subunit beta' (1413 aa).

Zn(2+)-binding residues include C70, C72, C85, and C88. Mg(2+) contacts are provided by D460, D462, and D464. Zn(2+)-binding residues include C819, C893, C900, and C903.

It belongs to the RNA polymerase beta' chain family. As to quaternary structure, the RNAP catalytic core consists of 2 alpha, 1 beta, 1 beta' and 1 omega subunit. When a sigma factor is associated with the core the holoenzyme is formed, which can initiate transcription. Mg(2+) serves as cofactor. Requires Zn(2+) as cofactor.

The catalysed reaction is RNA(n) + a ribonucleoside 5'-triphosphate = RNA(n+1) + diphosphate. DNA-dependent RNA polymerase catalyzes the transcription of DNA into RNA using the four ribonucleoside triphosphates as substrates. This is DNA-directed RNA polymerase subunit beta' from Burkholderia vietnamiensis (strain G4 / LMG 22486) (Burkholderia cepacia (strain R1808)).